We begin with the raw amino-acid sequence, 483 residues long: Serine/threonine-protein kinase BSK4 (483 aa).

The N-myristoyl glycine moiety is linked to residue G2. The Protein kinase domain occupies 56 to 322 (ENVVSEHGET…DTEVLSHVLM (267 aa)). ATP is bound by residues 62 to 70 (HGETAPNVV) and K84. Residue D178 is the Proton acceptor of the active site.

This sequence belongs to the protein kinase superfamily. Ser/Thr protein kinase family.

Its subcellular location is the cell membrane. The catalysed reaction is L-seryl-[protein] + ATP = O-phospho-L-seryl-[protein] + ADP + H(+). The enzyme catalyses L-threonyl-[protein] + ATP = O-phospho-L-threonyl-[protein] + ADP + H(+). Functionally, probable serine/threonine kinase that acts as a positive regulator of brassinosteroid (BR) signaling downstream of the receptor kinase BRI1. Functions redundantly with BSK3, BSK6, BSK7 and BSK8. The polypeptide is Serine/threonine-protein kinase BSK4 (Arabidopsis thaliana (Mouse-ear cress)).